A 276-amino-acid polypeptide reads, in one-letter code: Small ribosomal subunit protein uS2 (276 aa).

Serine 2 is subject to N-acetylserine.

Belongs to the universal ribosomal protein uS2 family. As to quaternary structure, component of the small ribosomal subunit. Mature ribosomes consist of a small (40S) and a large (60S) subunit. The 40S subunit contains about 33 different proteins and 1 molecule of RNA (18S). The 60S subunit contains about 49 different proteins and 3 molecules of RNA (28S, 5.8S and 5S). Interacts with rps-21.

Its subcellular location is the cytoplasm. Its function is as follows. Required for the assembly and/or stability of the 40S ribosomal subunit. Required for the processing of the 20S rRNA-precursor to mature 18S rRNA in a late step of the maturation of 40S ribosomal subunits. Involved in cold-warm shock-induced translocation of the RNA exosome components from the nucleolus to nucleoplasm. The chain is Small ribosomal subunit protein uS2 from Caenorhabditis elegans.